Reading from the N-terminus, the 551-residue chain is MHHLHPMIVCIFVMYTGIVGSDAIAGDQLLNIGVIQSKIRSLMYYTDGGASFIVVKLLPNLPPSNGTCNITSLDAYNVTLFKLLTPLIENLSKISTVTDTKTRQKRFAGVVVGLAALGVATAAQITAAVAIVKANANAAAINNLASSIQSTNKAVSDVIDASRTIATAVQAIQDHINGAIVNGITSASCRAHDALIGSILNLYLTELTTIFHNQITNPALTPLSIQALRILLGSTLPIVIESKLNTNLNTAELLSSGLLTGQIISISPMYMQMLIQINVPTFIMQPGAKVIDLIAISANHKLQEVVVQVPNRILEYANELQNYPANDCVVTPNSVFCRYNEGSPIPESQYQCLRGNLNSCTFTPIIGNFLKRFAFANGVLYANCKSLLCRCADPPHVVSQDDTQGISIIDIKRCSEMMLDTFSFRITSTFNATYVTDFSMINANIVHLSPLDLSNQINSINKSLKSAEDWIADSNFFANQARTAKTLYSLSAIALILSVITLVVVGLLIAYIIKLVSQIHQFRSLAATTMFHRENPAFFSKNNHGNIYGIS.

An N-terminal signal peptide occupies residues 1–23 (MHHLHPMIVCIFVMYTGIVGSDA). The Extracellular segment spans residues 24–492 (IAGDQLLNIG…TAKTLYSLSA (469 aa)). Residues Asn65, Asn69, Asn77, and Asn90 are each glycosylated (N-linked (GlcNAc...) asparagine; by host). 5 cysteine pairs are disulfide-bonded: Cys68/Cys189, Cys328/Cys337, Cys352/Cys360, Cys384/Cys389, and Cys391/Cys414. A fusion peptide region spans residues 107 to 131 (FAGVVVGLAALGVATAAQITAAVAI). The stretch at 132 to 160 (VKANANAAAINNLASSIQSTNKAVSDVID) forms a coiled coil. N-linked (GlcNAc...) asparagine; by host glycosylation is found at Asn431 and Asn461. The stretch at 456 to 481 (QINSINKSLKSAEDWIADSNFFANQA) forms a coiled coil. A helical transmembrane segment spans residues 493-513 (IALILSVITLVVVGLLIAYII). Topologically, residues 514-551 (KLVSQIHQFRSLAATTMFHRENPAFFSKNNHGNIYGIS) are cytoplasmic.

The protein belongs to the paramyxoviruses fusion glycoprotein family. In terms of assembly, homotrimer of disulfide-linked F1-F2. In terms of processing, the inactive precursor F0 is glycosylated and proteolytically cleaved into F1 and F2 to be functionally active. The cleavage is mediated by cellular proteases during the transport and maturation of the polypeptide.

The protein resides in the virion membrane. The protein localises to the host cell membrane. In terms of biological role, class I viral fusion protein. Under the current model, the protein has at least 3 conformational states: pre-fusion native state, pre-hairpin intermediate state, and post-fusion hairpin state. During viral and plasma cell membrane fusion, the heptad repeat (HR) regions assume a trimer-of-hairpins structure, positioning the fusion peptide in close proximity to the C-terminal region of the ectodomain. The formation of this structure appears to drive apposition and subsequent fusion of viral and plasma cell membranes. Directs fusion of viral and cellular membranes leading to delivery of the nucleocapsid into the cytoplasm. This fusion is pH independent and occurs directly at the outer cell membrane. The trimer of F1-F2 (F protein) probably interacts with HN at the virion surface. Upon HN binding to its cellular receptor, the hydrophobic fusion peptide is unmasked and interacts with the cellular membrane, inducing the fusion between cell and virion membranes. Later in infection, F proteins expressed at the plasma membrane of infected cells could mediate fusion with adjacent cells to form syncytia, a cytopathic effect that could lead to tissue necrosis. This is Fusion glycoprotein F0 (F) from Human parainfluenza 2 virus (HPIV-2).